The chain runs to 757 residues: Catalase-peroxidase (757 aa).

Positions 1–28 are disordered; it reads MENQSNDISKCPFHNGSMDNQAASGTKN. The span at 17–28 shows a compositional bias: polar residues; sequence SMDNQAASGTKN. A cross-link (tryptophyl-tyrosyl-methioninium (Trp-Tyr) (with M-273)) is located at residues 100–247; it reads WHSAGTYRVH…LAAVQMGLIY (148 aa). Residue His101 is the Proton acceptor of the active site. Residues 247–273 constitute a cross-link (tryptophyl-tyrosyl-methioninium (Tyr-Met) (with W-100)); sequence YVNPEGPDGNPDPILAAKDIRDTFGRM. His288 is a heme b binding site.

It belongs to the peroxidase family. Peroxidase/catalase subfamily. In terms of assembly, homodimer or homotetramer. It depends on heme b as a cofactor. In terms of processing, formation of the three residue Trp-Tyr-Met cross-link is important for the catalase, but not the peroxidase activity of the enzyme.

It carries out the reaction H2O2 + AH2 = A + 2 H2O. It catalyses the reaction 2 H2O2 = O2 + 2 H2O. Functionally, bifunctional enzyme with both catalase and broad-spectrum peroxidase activity. The chain is Catalase-peroxidase from Flavobacterium johnsoniae (strain ATCC 17061 / DSM 2064 / JCM 8514 / BCRC 14874 / CCUG 350202 / NBRC 14942 / NCIMB 11054 / UW101) (Cytophaga johnsonae).